Reading from the N-terminus, the 196-residue chain is NAD(P)H-quinone oxidoreductase subunit I (196 aa).

4Fe-4S ferredoxin-type domains follow at residues 55 to 84 (GRIH…VDWE) and 95 to 124 (KHYS…MTEE). [4Fe-4S] cluster contacts are provided by C64, C67, C70, C74, C104, C107, C110, and C114. A disordered region spans residues 170–196 (SPHDLPEGSQRSGKRPEEIIEEAEASS).

It belongs to the complex I 23 kDa subunit family. In terms of assembly, NDH-1 is composed of at least 11 different subunits. [4Fe-4S] cluster is required as a cofactor.

It is found in the cellular thylakoid membrane. The catalysed reaction is a plastoquinone + NADH + (n+1) H(+)(in) = a plastoquinol + NAD(+) + n H(+)(out). It catalyses the reaction a plastoquinone + NADPH + (n+1) H(+)(in) = a plastoquinol + NADP(+) + n H(+)(out). Its function is as follows. NDH-1 shuttles electrons from an unknown electron donor, via FMN and iron-sulfur (Fe-S) centers, to quinones in the respiratory and/or the photosynthetic chain. The immediate electron acceptor for the enzyme in this species is believed to be plastoquinone. Couples the redox reaction to proton translocation, and thus conserves the redox energy in a proton gradient. This chain is NAD(P)H-quinone oxidoreductase subunit I, found in Crocosphaera subtropica (strain ATCC 51142 / BH68) (Cyanothece sp. (strain ATCC 51142)).